A 390-amino-acid polypeptide reads, in one-letter code: 2-oxoisovalerate dehydrogenase subunit beta, mitochondrial (390 aa).

A mitochondrion-targeting transit peptide spans 1 to 48 (MAAVAARAGGLLRLGAAGAERRRRGLRCAALVQGFLQPAVDDASQKRR). Residue Tyr150 participates in thiamine diphosphate binding. K(+)-binding residues include Gly176, Leu178, Thr179, Cys226, and Asp229. Lys230 is modified (N6-acetyllysine). Asn231 lines the K(+) pocket. At Lys239 the chain carries N6-acetyllysine.

As to quaternary structure, heterotetramer of 2 alpha/BCKDHA and 2 beta chains/BCKDHB that forms the branched-chain alpha-keto acid decarboxylase (E1) component of the BCKD complex. The branched-chain alpha-ketoacid dehydrogenase is a large complex composed of three major building blocks E1, E2 and E3. It is organized around E2, a 24-meric cubic core composed of DBT, to which are associated 6 to 12 copies of E1, and approximately 6 copies of the dehydrogenase E3, a DLD dimer. The cofactor is thiamine diphosphate.

The protein localises to the mitochondrion matrix. The enzyme catalyses N(6)-[(R)-lipoyl]-L-lysyl-[protein] + 3-methyl-2-oxobutanoate + H(+) = N(6)-[(R)-S(8)-2-methylpropanoyldihydrolipoyl]-L-lysyl-[protein] + CO2. Its function is as follows. Together with BCKDHA forms the heterotetrameric E1 subunit of the mitochondrial branched-chain alpha-ketoacid dehydrogenase (BCKD) complex. The BCKD complex catalyzes the multi-step oxidative decarboxylation of alpha-ketoacids derived from the branched-chain amino-acids valine, leucine and isoleucine producing CO2 and acyl-CoA which is subsequently utilized to produce energy. The E1 subunit catalyzes the first step with the decarboxylation of the alpha-ketoacid forming an enzyme-product intermediate. A reductive acylation mediated by the lipoylamide cofactor of E2 extracts the acyl group from the E1 active site for the next step of the reaction. This chain is 2-oxoisovalerate dehydrogenase subunit beta, mitochondrial, found in Rattus norvegicus (Rat).